The sequence spans 534 residues: Prolyl 4-hydroxylase subunit alpha-1 (534 aa).

A signal peptide spans 1 to 17 (MIWGVLMMGILLPQCSA). The N-linked (GlcNAc...) asparagine glycan is linked to Asn113. A TPR repeat occupies 205–238 (VSVLDYLSYAVYQQGDLDKALLLTKKLLELDPEH). Asn259 carries N-linked (GlcNAc...) asparagine glycosylation. In terms of domain architecture, Fe2OG dioxygenase spans 411 to 519 (TAEELQVANY…KWVSNKWLHE (109 aa)). Residues His429, Asp431, and His500 each contribute to the Fe cation site. Lys510 serves as a coordination point for 2-oxoglutarate.

This sequence belongs to the P4HA family. In terms of assembly, heterotetramer of two alpha-1 chains and two beta chains (P4HB)(the beta chain is the multi-functional PDI), where P4HB plays the role of a structural subunit; this tetramer catalyzes the formation of 4-hydroxyproline in collagen. Requires Fe(2+) as cofactor. It depends on L-ascorbate as a cofactor.

The protein localises to the endoplasmic reticulum lumen. The catalysed reaction is L-prolyl-[collagen] + 2-oxoglutarate + O2 = trans-4-hydroxy-L-prolyl-[collagen] + succinate + CO2. Functionally, catalyzes the post-translational formation of 4-hydroxyproline in -Xaa-Pro-Gly- sequences in collagens and other proteins. In Rattus norvegicus (Rat), this protein is Prolyl 4-hydroxylase subunit alpha-1 (P4ha1).